The chain runs to 236 residues: Uridylate kinase (236 aa).

10 to 13 (KLSG) is a binding site for ATP. G52 contributes to the UMP binding site. ATP contacts are provided by G53 and R57. UMP contacts are provided by residues D72 and 133–140 (TGNPFFTT). ATP contacts are provided by T160, Y166, and D169.

Belongs to the UMP kinase family. In terms of assembly, homohexamer.

The protein resides in the cytoplasm. The catalysed reaction is UMP + ATP = UDP + ADP. Its pathway is pyrimidine metabolism; CTP biosynthesis via de novo pathway; UDP from UMP (UMPK route): step 1/1. Inhibited by UTP. Its function is as follows. Catalyzes the reversible phosphorylation of UMP to UDP. This Cupriavidus pinatubonensis (strain JMP 134 / LMG 1197) (Cupriavidus necator (strain JMP 134)) protein is Uridylate kinase.